A 929-amino-acid polypeptide reads, in one-letter code: Ribonucleoside-diphosphate reductase large chain (929 aa).

The 92-residue stretch at 1–92 (MYVKKRDGRQ…VSNLHKQTKK (92 aa)) folds into the ATP-cone domain. ATP is bound by residues 5-6 (KR), 11-17 (ERVQFDK), Thr53, and Asp57. 2 residues coordinate GDP: Ser202 and Ser217. Cys218 and Cys444 are joined by a disulfide. DTTP contacts are provided by residues 226 to 228 (DSI), Lys243, Arg256, and 263 to 264 (AG). Asn427 serves as a coordination point for GDP. The Proton acceptor role is filled by Asn427. Catalysis depends on Cys429, which acts as the Cysteine radical intermediate. Residues Glu431 and 605-608 (TAST) each bind GDP. The Proton acceptor role is filled by Glu431. Residues 789–904 (ENTSGPRPYA…RDENIYSNAP (116 aa)) form a disordered region. Polar residues predominate over residues 800–809 (TGVSGTSTPI). Residues 868-884 (VKTEDIGSPLLERKEGQ) are compositionally biased toward basic and acidic residues. Over residues 885–894 (NEDVDEDSQE) the composition is skewed to acidic residues.

The protein belongs to the ribonucleoside diphosphate reductase large chain family.

It carries out the reaction a 2'-deoxyribonucleoside 5'-diphosphate + [thioredoxin]-disulfide + H2O = a ribonucleoside 5'-diphosphate + [thioredoxin]-dithiol. With respect to regulation, under complex allosteric control mediated by deoxynucleoside triphosphates and ATP binding to separate specificity and activation sites on the large subunit. The type of nucleotide bound at the specificity site determines substrate preference. It seems probable that ATP makes the enzyme reduce CDP and UDP, dGTP favors ADP reduction and dTTP favors GDP reduction. Stimulated by ATP and inhibited by dATP binding to the activity site. Functionally, provides the precursors necessary for DNA synthesis. Catalyzes the biosynthesis of deoxyribonucleotides from the corresponding ribonucleotides. This chain is Ribonucleoside-diphosphate reductase large chain (rnr-1), found in Neurospora crassa (strain ATCC 24698 / 74-OR23-1A / CBS 708.71 / DSM 1257 / FGSC 987).